The primary structure comprises 161 residues: Protein PLASTID TRANSCRIPTIONALLY ACTIVE 7 (161 aa).

The transit peptide at 1–32 (MASFTCSSPSSILPIIDTRSGNLRCTFQSQVS) directs the protein to the chloroplast.

Component of the transcriptionally active chromosome (TAC) complexes. Interacts with FLN1, PTAC10, PTAC12/HMR/PAP5 and PTAC14. Binds to SL1/MTERF3. Mostly expressed in leaves, flowers and seedlings, and, to a lower extent, in roots and stems.

The protein resides in the plastid. The protein localises to the chloroplast. In terms of biological role, essential for chloroplast development, especially for thylakoid formation. Involved in plastid gene expression, probably by maintaining plastid-encoded RNA polymerase (PEP) activity. The sequence is that of Protein PLASTID TRANSCRIPTIONALLY ACTIVE 7 from Arabidopsis thaliana (Mouse-ear cress).